A 390-amino-acid polypeptide reads, in one-letter code: Cytochrome b (390 aa).

The next 4 helical transmembrane spans lie at 32–52 (MGSLLGLCLVIQILTGIFMAM), 76–98 (WFLRYAHANGASFFFICMYIHMG), 113–133 (LWTIGVIIFILTMATAFLGYC), and 179–199 (FFALHYLFPFVIAAVVIMHMM). Residues H82 and H96 each contribute to the heme b site. Heme b is bound by residues H183 and H197. Residue H202 coordinates a ubiquinone. Helical transmembrane passes span 225–245 (FVFKDLITVFVFLIVFSLFVF), 289–309 (LMGVITMFSAILVLLVLPFTD), 321–341 (LSKLFFFLFVFNFVLLGQIGA), and 348–368 (YILMGQISTFLYFAYFLVFIP).

The protein belongs to the cytochrome b family. As to quaternary structure, fungal cytochrome b-c1 complex contains 10 subunits; 3 respiratory subunits, 2 core proteins and 5 low-molecular weight proteins. Cytochrome b-c1 complex is a homodimer. It depends on heme b as a cofactor.

The protein resides in the mitochondrion inner membrane. Component of the ubiquinol-cytochrome c reductase complex (complex III or cytochrome b-c1 complex) that is part of the mitochondrial respiratory chain. The b-c1 complex mediates electron transfer from ubiquinol to cytochrome c. Contributes to the generation of a proton gradient across the mitochondrial membrane that is then used for ATP synthesis. The protein is Cytochrome b (COB) of Naumovozyma castellii (Yeast).